The chain runs to 374 residues: Spore germination protein GerLB (374 aa).

The next 10 membrane-spanning stretches (helical) occupy residues 16–36, 44–64, 86–106, 122–142, 149–169, 192–212, 227–247, 279–301, 313–333, and 341–361; these read IGFA…PRDI, DGWI…WFVT, PVAY…TAYE, TPIQ…IAGS, LNVL…LLNI, VKNS…AVLL, AVMV…SVFT, FFTT…ASLL, IFIF…SSLN, and YLAW…LIVY.

Belongs to the amino acid-polyamine-organocation (APC) superfamily. Spore germination protein (SGP) (TC 2.A.3.9) family.

The protein localises to the membrane. Its function is as follows. Contributes to the L-alanine germination response. The chain is Spore germination protein GerLB (gerLB) from Bacillus cereus.